Here is a 103-residue protein sequence, read N- to C-terminus: Antitoxin VapB1 (103 aa).

In terms of biological role, antitoxin component of a type II toxin-antitoxin (TA) system. Upon expression in E.coli neutralizes the effect of cognate toxin VapC1, partially inhibits the RNase activity of VapC1 in vitro. The protein is Antitoxin VapB1 (vapB1) of Rickettsia felis (strain ATCC VR-1525 / URRWXCal2) (Rickettsia azadi).